Here is a 204-residue protein sequence, read N- to C-terminus: MSETYELKAETRDRVGKGSSRELRRNGLIPAVIYGDKQPPLSIALSTKDVTMKIHAGGFMTTVATIDVNGEKIRVLPKDYQLDPVRDFTMHVDFLRVSKGSQVSVQVPVHFENEEKSPGLKQGGALNIVRHEVELNVSADNIPESLTVDLTGLKIGDTVHISNVKLPAGATPVIADRDFTVATITGRTQEAEPTEEAEGGEEEA.

The segment at methionine 1–serine 20 is disordered.

This sequence belongs to the bacterial ribosomal protein bL25 family. CTC subfamily. Part of the 50S ribosomal subunit; part of the 5S rRNA/L5/L18/L25 subcomplex. Contacts the 5S rRNA. Binds to the 5S rRNA independently of L5 and L18.

In terms of biological role, this is one of the proteins that binds to the 5S RNA in the ribosome where it forms part of the central protuberance. The protein is Large ribosomal subunit protein bL25 of Rhizobium meliloti (strain 1021) (Ensifer meliloti).